The primary structure comprises 617 residues: Guanylate cyclase soluble subunit beta-2 (617 aa).

A heme-binding site is contributed by histidine 26. Residues 391-519 (TILFSDVVTF…DTVNTASRME (129 aa)) enclose the Guanylate cyclase domain. Residues 577-586 (RSKTPVDHKG) show a composition bias toward basic and acidic residues. Residues 577-605 (RSKTPVDHKGSTQKASLPTTKLQGSVQPS) are disordered. The span at 588 to 604 (TQKASLPTTKLQGSVQP) shows a compositional bias: polar residues.

It belongs to the adenylyl cyclase class-4/guanylyl cyclase family. As to quaternary structure, heterodimer of an alpha and a beta chain. The cofactor is heme. As to expression, expressed in gastric signet ring cell carcinoma, but not in the normal stomach.

The protein localises to the cytoplasm. It carries out the reaction GTP = 3',5'-cyclic GMP + diphosphate. Its activity is regulated as follows. Activated by nitric oxide in the presence of magnesium or manganese ions. This chain is Guanylate cyclase soluble subunit beta-2 (GUCY1B2), found in Homo sapiens (Human).